A 301-amino-acid chain; its full sequence is 4-diphosphocytidyl-2-C-methyl-D-erythritol kinase (301 aa).

The active site involves Lys-10. Position 96 to 106 (96 to 106) interacts with ATP; the sequence is PMGGGVGGGSS. Residue Asp-138 is part of the active site.

It belongs to the GHMP kinase family. IspE subfamily.

The catalysed reaction is 4-CDP-2-C-methyl-D-erythritol + ATP = 4-CDP-2-C-methyl-D-erythritol 2-phosphate + ADP + H(+). The protein operates within isoprenoid biosynthesis; isopentenyl diphosphate biosynthesis via DXP pathway; isopentenyl diphosphate from 1-deoxy-D-xylulose 5-phosphate: step 3/6. Its function is as follows. Catalyzes the phosphorylation of the position 2 hydroxy group of 4-diphosphocytidyl-2C-methyl-D-erythritol. The protein is 4-diphosphocytidyl-2-C-methyl-D-erythritol kinase of Alcanivorax borkumensis (strain ATCC 700651 / DSM 11573 / NCIMB 13689 / SK2).